A 341-amino-acid polypeptide reads, in one-letter code: Phosphoribosylformylglycinamidine cyclo-ligase (341 aa).

It belongs to the AIR synthase family.

Its subcellular location is the cytoplasm. The catalysed reaction is 2-formamido-N(1)-(5-O-phospho-beta-D-ribosyl)acetamidine + ATP = 5-amino-1-(5-phospho-beta-D-ribosyl)imidazole + ADP + phosphate + H(+). It functions in the pathway purine metabolism; IMP biosynthesis via de novo pathway; 5-amino-1-(5-phospho-D-ribosyl)imidazole from N(2)-formyl-N(1)-(5-phospho-D-ribosyl)glycinamide: step 2/2. This chain is Phosphoribosylformylglycinamidine cyclo-ligase, found in Xanthomonas oryzae pv. oryzae (strain MAFF 311018).